The primary structure comprises 104 residues: L-rhamnose mutarotase (104 aa).

Position 18 (tyrosine 18) interacts with substrate. Residue histidine 22 is the Proton donor of the active site. Substrate is bound by residues tyrosine 41 and 76-77 (WW).

This sequence belongs to the rhamnose mutarotase family. Homodimer.

The protein resides in the cytoplasm. The catalysed reaction is alpha-L-rhamnose = beta-L-rhamnose. Its pathway is carbohydrate metabolism; L-rhamnose metabolism. In terms of biological role, involved in the anomeric conversion of L-rhamnose. The sequence is that of L-rhamnose mutarotase from Enterobacter sp. (strain 638).